Here is a 766-residue protein sequence, read N- to C-terminus: Flocculation suppression protein (766 aa).

Disordered stretches follow at residues 1–52, 129–181, 203–247, 547–619, and 657–766; these read MSEE…HGSK, HDHS…PTKI, KRRA…SSNS, KPVP…SISG, and SVTP…KVKM. 2 stretches are compositionally biased toward low complexity: residues 8–19 and 134–147; these read SAPAPASTPAPA and NDAN…TNDD. The DNA-binding element occupies 64-186; sequence IFIHKLYQIL…NPTKIWEFKH (123 aa). The segment covering 171 to 181 has biased composition (basic and acidic residues); sequence QEKEKSNPTKI. A compositionally biased stretch (low complexity) spans 208–224; sequence SRNNSSINSRKNSSNQN. Residue Ser-220 is modified to Phosphoserine. Over residues 236 to 247 the composition is skewed to polar residues; sequence SSIQDPSTSSNS. Ser-556 carries the post-translational modification Phosphoserine. Over residues 679-699 the composition is skewed to polar residues; the sequence is AVSSNLINSPMNVEHSSSLSQ. Over residues 708–719 the composition is skewed to low complexity; it reads LPQPSLPTTSTT. The residue at position 733 (Ser-733) is a Phosphoserine. Polar residues predominate over residues 738-750; that stretch reads LLNQEDSSTSSAD.

This sequence in the N-terminal section; belongs to the HSF family.

The protein localises to the nucleus. Functionally, involved in cell surface assembly and regulation of the gene related to flocculation (asexual cell aggregation). Mutations in SFL1 causes constitutive cell aggregation. In Saccharomyces cerevisiae (strain ATCC 204508 / S288c) (Baker's yeast), this protein is Flocculation suppression protein (SFL1).